We begin with the raw amino-acid sequence, 210 residues long: MMAERFSALQAVAGPVSRETFDGLVAFEGEFRKWSARINLTAPSTLPHLWERHILDSAQLIRIAPAARRWLDLGSGGGFPGAVIAILMKEHAPAQVDLVESNRKKAAFLQTSLASLKAPCMIHPQRIEDCYGQIPPPEVITARALAPLPVLFGLAEPWMKAGARALLHKGRDYRREIEESRDAWGFNLLEHGNEVGGDGVILEISDLRRL.

Residues G74, F79, 127 to 128 (IE), and R143 contribute to the S-adenosyl-L-methionine site.

This sequence belongs to the methyltransferase superfamily. RNA methyltransferase RsmG family.

The protein resides in the cytoplasm. It carries out the reaction guanosine(527) in 16S rRNA + S-adenosyl-L-methionine = N(7)-methylguanosine(527) in 16S rRNA + S-adenosyl-L-homocysteine. In terms of biological role, specifically methylates the N7 position of guanine in position 527 of 16S rRNA. This Chelativorans sp. (strain BNC1) protein is Ribosomal RNA small subunit methyltransferase G.